A 118-amino-acid polypeptide reads, in one-letter code: Basic phospholipase A2 CM-III (118 aa).

Intrachain disulfides connect cysteine 11/cysteine 70, cysteine 26/cysteine 117, cysteine 28/cysteine 44, cysteine 43/cysteine 98, cysteine 50/cysteine 91, cysteine 59/cysteine 84, and cysteine 77/cysteine 89. Ca(2+) contacts are provided by tyrosine 27, glycine 29, and glycine 31. Residue histidine 47 is part of the active site. Residue aspartate 48 coordinates Ca(2+). The short motif at 52–69 (EKAGKMGCWPYFTLYKYK) is the Coagulation factor Xa binding motif element. Aspartate 92 is a catalytic residue.

Belongs to the phospholipase A2 family. Group I subfamily. D49 sub-subfamily. Requires Ca(2+) as cofactor. Expressed by the venom gland.

It localises to the secreted. The catalysed reaction is a 1,2-diacyl-sn-glycero-3-phosphocholine + H2O = a 1-acyl-sn-glycero-3-phosphocholine + a fatty acid + H(+). In terms of biological role, snake venom phospholipase A2 (PLA2) that shows several activities. It shows strong anticoagulant activity, probably by binding to coagulation factor Xa (F10) and inhibiting the formation of the prothrombinase complex, shows direct hemolytic action, causes neuromuscular blockade with a gradual contracture and a decreased sensitivity to ACh and KCl, abolishes twitches evoked by indirect stimulation earlier than those by direct stimulation (in the mouse phrenic nerve-diaphragm preparation), and causes myonecrosis when injected intramuscularly. PLA2 catalyzes the calcium-dependent hydrolysis of the 2-acyl groups in 3-sn-phosphoglycerides. In Naja mossambica (Mozambique spitting cobra), this protein is Basic phospholipase A2 CM-III.